Reading from the N-terminus, the 96-residue chain is Growth-regulated alpha protein (96 aa).

Residues 1-24 form the signal peptide; it reads MVSATRSLLCAALPVLATSRQATG. 2 disulfides stabilise this stretch: Cys33/Cys59 and Cys35/Cys75.

This sequence belongs to the intercrine alpha (chemokine CxC) family. As to quaternary structure, monomer and homodimer. In terms of tissue distribution, at least expressed in the lung and trachea.

The protein localises to the secreted. Its function is as follows. Has chemotactic activity for neutrophils. Contributes to neutrophil activation during inflammation. This Rattus norvegicus (Rat) protein is Growth-regulated alpha protein (Cxcl1).